A 97-amino-acid chain; its full sequence is Homeobox protein HD-9 (97 aa).

The homeobox DNA-binding region spans 6–65 (MPAKKSRLSKAQRDFLDTYFEVNPHPNTQERAYIASQSLVSEEKIRNWFQNRRTRERGDC).

The protein resides in the nucleus. The sequence is that of Homeobox protein HD-9 (HD-9) from Encephalitozoon cuniculi (strain GB-M1) (Microsporidian parasite).